Here is a 146-residue protein sequence, read N- to C-terminus: 3-hydroxyacyl-[acyl-carrier-protein] dehydratase FabZ (146 aa).

Residue His-49 is part of the active site.

This sequence belongs to the thioester dehydratase family. FabZ subfamily.

It localises to the cytoplasm. It catalyses the reaction a (3R)-hydroxyacyl-[ACP] = a (2E)-enoyl-[ACP] + H2O. Involved in unsaturated fatty acids biosynthesis. Catalyzes the dehydration of short chain beta-hydroxyacyl-ACPs and long chain saturated and unsaturated beta-hydroxyacyl-ACPs. This is 3-hydroxyacyl-[acyl-carrier-protein] dehydratase FabZ from Pseudomonas entomophila (strain L48).